Reading from the N-terminus, the 490-residue chain is GTPase Der (490 aa).

2 consecutive EngA-type G domains span residues 3-166 and 200-373; these read PVVA…AEAM and IKLA…DSAT. Residues 9 to 16, 56 to 60, 118 to 121, 206 to 213, 253 to 257, and 318 to 321 contribute to the GTP site; these read GRPNVGKS, DTGGI, NKVD, GKPNVGKS, DTAGV, and NKWD. The 85-residue stretch at 374–458 folds into the KH-like domain; sequence RRVSTSMLTR…PIQLRFQEGG (85 aa). The disordered stretch occupies residues 470 to 490; sequence TVSQERRRKRMVGHIRDKNKD.

This sequence belongs to the TRAFAC class TrmE-Era-EngA-EngB-Septin-like GTPase superfamily. EngA (Der) GTPase family. As to quaternary structure, associates with the 50S ribosomal subunit.

In terms of biological role, GTPase that plays an essential role in the late steps of ribosome biogenesis. The polypeptide is GTPase Der (Shewanella pealeana (strain ATCC 700345 / ANG-SQ1)).